A 505-amino-acid chain; its full sequence is MEMEIKDENLRNSVPFVRQLSTDSVKTKTEYDNEDGTPYKSTTQKLFLWTQLLAAFAVSVGSMNVGFSSGYTSPAVLTMNITLDITKEEITWVGGLMPLAALVGGIVGGPLIEYLGRKKTIMGTAVPFTIGWMLIANAINVVMVFAGRVICGVCVGIVSLAFPVYIGETIQPEVRGALGLLPTAFGNTGILLAFLVGSYLDWSNLAFFGAAIPVPFFLLMILTPETPRWYVSKARVQEARKSLRWLRGKNVNIEKEMRDLTISQTESDRTGGNAFKQLFSKRYLPAVMISLGLMLFQQLTGINAVIFYAASIFQMSGSSVDENLASIIIGVVNFISTFIATMLIDRLGRKVLLYISSVAMITTLLALGAYFYLKQNHIDVTAYGWLPLACLVIYVLGFSIGFGPIPWLMLGEILPSKIRGTAASLATGFNWTCTFIVTKTFQNIIDAIYMHGTLWLFAVICIGGLLFVIFFVPETKGKSLEEIEMKLTSGSRRVRNISKQPENIC.

Over 1–46 (MEMEIKDENLRNSVPFVRQLSTDSVKTKTEYDNEDGTPYKSTTQKL) the chain is Cytoplasmic. Residues 47 to 67 (FLWTQLLAAFAVSVGSMNVGF) traverse the membrane as a helical segment. The Extracellular portion of the chain corresponds to 68 to 91 (SSGYTSPAVLTMNITLDITKEEIT). An N-linked (GlcNAc...) asparagine glycan is attached at Asn80. The chain crosses the membrane as a helical span at residues 92–112 (WVGGLMPLAALVGGIVGGPLI). Residues 113 to 124 (EYLGRKKTIMGT) are Cytoplasmic-facing. Residues 125–145 (AVPFTIGWMLIANAINVVMVF) traverse the membrane as a helical segment. Over 146–149 (AGRV) the chain is Extracellular. The helical transmembrane segment at 150-170 (ICGVCVGIVSLAFPVYIGETI) threads the bilayer. Over 171-175 (QPEVR) the chain is Cytoplasmic. Residues 176 to 196 (GALGLLPTAFGNTGILLAFLV) form a helical membrane-spanning segment. The Extracellular portion of the chain corresponds to 197 to 201 (GSYLD). Residues 202–222 (WSNLAFFGAAIPVPFFLLMIL) form a helical membrane-spanning segment. Residues 223-286 (TPETPRWYVS…QLFSKRYLPA (64 aa)) are Cytoplasmic-facing. Residues 287–307 (VMISLGLMLFQQLTGINAVIF) form a helical membrane-spanning segment. The Extracellular portion of the chain corresponds to 308 to 323 (YAASIFQMSGSSVDEN). The helical transmembrane segment at 324–344 (LASIIIGVVNFISTFIATMLI) threads the bilayer. At 345-350 (DRLGRK) the chain is on the cytoplasmic side. The chain crosses the membrane as a helical span at residues 351–371 (VLLYISSVAMITTLLALGAYF). Topologically, residues 372–390 (YLKQNHIDVTAYGWLPLAC) are extracellular. A helical membrane pass occupies residues 391–411 (LVIYVLGFSIGFGPIPWLMLG). Over 412–419 (EILPSKIR) the chain is Cytoplasmic. The helical transmembrane segment at 420 to 437 (GTAASLATGFNWTCTFIV) threads the bilayer. The Extracellular portion of the chain corresponds to 438 to 451 (TKTFQNIIDAIYMH). The chain crosses the membrane as a helical span at residues 452–472 (GTLWLFAVICIGGLLFVIFFV). Residues 473-505 (PETKGKSLEEIEMKLTSGSRRVRNISKQPENIC) lie on the Cytoplasmic side of the membrane.

It belongs to the major facilitator superfamily. Sugar transporter (TC 2.A.1.1) family. Trehalose transporter subfamily. As to expression, expressed in many larval tissues at a low level, moderate levels of expression are seen in testis and head and highest expression in muscle.

It localises to the cell membrane. High-capacity facilitative transporter for trehalose. Does not transport maltose, sucrose or lactose. Mediates the bidirectional transfer of trehalose. Responsible for the transport of trehalose synthesized in the fat body and the incorporation of trehalose into other tissues that require a carbon source, thereby regulating trehalose levels in the hemolymph. The protein is Facilitated trehalose transporter Tret1 of Bombyx mori (Silk moth).